The sequence spans 420 residues: Tyrosine--tRNA ligase (420 aa).

Tyr38 provides a ligand contact to L-tyrosine. Positions 43–52 match the 'HIGH' region motif; the sequence is PTGDSLHIGH. L-tyrosine contacts are provided by Tyr169 and Gln173. The 'KMSKS' region motif lies at 231–235; sequence KFGKS. Lys234 provides a ligand contact to ATP. In terms of domain architecture, S4 RNA-binding spans 353–419; sequence KNIVDFLVDT…GKRKYTLVTI (67 aa).

This sequence belongs to the class-I aminoacyl-tRNA synthetase family. TyrS type 1 subfamily. In terms of assembly, homodimer.

It localises to the cytoplasm. The enzyme catalyses tRNA(Tyr) + L-tyrosine + ATP = L-tyrosyl-tRNA(Tyr) + AMP + diphosphate + H(+). Catalyzes the attachment of tyrosine to tRNA(Tyr) in a two-step reaction: tyrosine is first activated by ATP to form Tyr-AMP and then transferred to the acceptor end of tRNA(Tyr). The chain is Tyrosine--tRNA ligase from Lactobacillus acidophilus (strain ATCC 700396 / NCK56 / N2 / NCFM).